The sequence spans 238 residues: Flagellar L-ring protein (238 aa).

The first 23 residues, 1-23, serve as a signal peptide directing secretion; that stretch reads MVKLFSYKIKYYLTAFFIIIIQS. The N-palmitoyl cysteine moiety is linked to residue Cys-24. Cys-24 is lipidated: S-diacylglycerol cysteine.

This sequence belongs to the FlgH family. As to quaternary structure, the basal body constitutes a major portion of the flagellar organelle and consists of four rings (L,P,S, and M) mounted on a central rod.

The protein resides in the cell outer membrane. The protein localises to the bacterial flagellum basal body. Its function is as follows. Assembles around the rod to form the L-ring and probably protects the motor/basal body from shearing forces during rotation. The polypeptide is Flagellar L-ring protein (Buchnera aphidicola subsp. Schizaphis graminum (strain Sg)).